A 150-amino-acid chain; its full sequence is MARIGIVVSEFNYDITYLMLQKAISHARFLGLEITYVFKVPGTYEIPFAVANLLKRNDVDGVVALGAVIKGATKHDELVASQTARKLMDLMIQYGKPVGLGIIGPGATRMQALERVEDYARRAVEAVAKMINRSKSLEEKKFAGETVFIE.

Residues F11, 43–45 (TYE), and 67–69 (AVI) contribute to the 5-amino-6-(D-ribitylamino)uracil site. Residue 72–73 (AT) coordinates (2S)-2-hydroxy-3-oxobutyl phosphate. H75 acts as the Proton donor in catalysis. L100 provides a ligand contact to 5-amino-6-(D-ribitylamino)uracil. Residue R115 participates in (2S)-2-hydroxy-3-oxobutyl phosphate binding.

It belongs to the DMRL synthase family.

It catalyses the reaction (2S)-2-hydroxy-3-oxobutyl phosphate + 5-amino-6-(D-ribitylamino)uracil = 6,7-dimethyl-8-(1-D-ribityl)lumazine + phosphate + 2 H2O + H(+). It functions in the pathway cofactor biosynthesis; riboflavin biosynthesis; riboflavin from 2-hydroxy-3-oxobutyl phosphate and 5-amino-6-(D-ribitylamino)uracil: step 1/2. Functionally, catalyzes the formation of 6,7-dimethyl-8-ribityllumazine by condensation of 5-amino-6-(D-ribitylamino)uracil with 3,4-dihydroxy-2-butanone 4-phosphate. This is the penultimate step in the biosynthesis of riboflavin. The protein is 6,7-dimethyl-8-ribityllumazine synthase of Staphylothermus marinus (strain ATCC 43588 / DSM 3639 / JCM 9404 / F1).